We begin with the raw amino-acid sequence, 443 residues long: Signal recognition particle 54 kDa protein (443 aa).

Residues 107-114 (GVQGSGKT), 189-193 (DTAGR), and 247-250 (TKLD) each bind GTP.

The protein belongs to the GTP-binding SRP family. SRP54 subfamily. Part of the signal recognition particle protein translocation system, which is composed of SRP and FtsY. Archaeal SRP consists of a 7S RNA molecule of 300 nucleotides and two protein subunits: SRP54 and SRP19.

The protein resides in the cytoplasm. The enzyme catalyses GTP + H2O = GDP + phosphate + H(+). Its function is as follows. Involved in targeting and insertion of nascent membrane proteins into the cytoplasmic membrane. Binds to the hydrophobic signal sequence of the ribosome-nascent chain (RNC) as it emerges from the ribosomes. The SRP-RNC complex is then targeted to the cytoplasmic membrane where it interacts with the SRP receptor FtsY. This chain is Signal recognition particle 54 kDa protein, found in Pyrococcus horikoshii (strain ATCC 700860 / DSM 12428 / JCM 9974 / NBRC 100139 / OT-3).